The chain runs to 861 residues: MKPNKPRYIACSHCSKAKARCDRKVPCSRCVSKQLVCHPRSARRAIHTPTEQHLRWLEPGDVPRRDEQQTILLAQQTPVDADNTMVTGTHMRPDSPDVSSQLQSTGASYISADKMTHLSTEWLHQITPESSMHMPLNVPLDQDVTHQSSPDLDLINELIGYPACDDLGTTYMEFVGIGPTDSPPLSPSRDGRSVKDRNSRLVALCPGHPRHWSEDFSSQMRISMQRFEQTINLRQPWTTSCSETWASLPYPSVMNPITETTRDSLVAVSQLLLLQTRSIHLWENGRNSRRLSSGNLAVLNLPPAKVLDSLLRAYTSCFDQYFGLLSSELQDPNDIMTHPEHDLKAAGILLLLMIAIGATANPEPKMHIFAIGMAEMCRTALCDLMEDEVPNTRPDILSHCALLLLYLGMWSGERWLMRIICAHRQIYTQLLHRCPLSFNTNDSLQKLHGGLNLSQQWQHWKEQEMQSRLTYAWMVTDQEWSLVYDTPSNFSVDMMTQSLPNSERLWRATSEGDWAALAPEMFGTQAPTCLRDLYTSFMNHELRPGRSTLPLQYLRLLLVPLHGMVFHLRQWLQSFPNCPVRWRKNNQGLSNPAIHAQLDQVQALLPEWYDLAIHLTNTSPAFVSMLVMYHLIALNAMASFPNIEDALLRGPLDRSQLPNPRGSDPCPLGTCQSTVAEDSAEEALVHCGQILRLVRLMPPSDQPLWWSAVVYRIALITIFLSIKRHPHHWLPAVMLGQMVQDTASSSGTSTDGSGVSLMSNPLFTDRVDAQPHHRPVILNNVAPNDNELLQFTKYREGEPCLAVRDGQLIELRQPRDVMSFFIDLVDGGHLPALHATNFQASVKDSLERLADRWGFLSLHKT.

The zn(2)-C6 fungal-type DNA-binding region spans 11–37 (CSHCSKAKARCDRKVPCSRCVSKQLVC).

Its subcellular location is the nucleus. In terms of biological role, transcription factor that positively regulates the gene cluster that mediates the biosynthesis of oxopyrrolidines, polyketide-amino acid hybrid compounds with feature structures of tetramic acid. This Penicillium oxalicum (strain 114-2 / CGMCC 5302) (Penicillium decumbens) protein is Transcription factor opdJ.